Consider the following 224-residue polypeptide: ATP synthase subunit a (224 aa).

A run of 6 helical transmembrane segments spans residues 17-37 (FIYM…VKMA), 78-98 (LVAT…VPGF), 104-124 (FLEF…YEGI), 136-156 (FLGP…VSHF), 176-196 (FLMV…YALL), and 201-221 (FLQA…AIAV).

The protein belongs to the ATPase A chain family. In terms of assembly, F-type ATPases have 2 components, CF(1) - the catalytic core - and CF(0) - the membrane proton channel. CF(1) has five subunits: alpha(3), beta(3), gamma(1), delta(1), epsilon(1). CF(0) has three main subunits: a(1), b(2) and c(9-12). The alpha and beta chains form an alternating ring which encloses part of the gamma chain. CF(1) is attached to CF(0) by a central stalk formed by the gamma and epsilon chains, while a peripheral stalk is formed by the delta and b chains.

The protein resides in the cell inner membrane. Its function is as follows. Key component of the proton channel; it plays a direct role in the translocation of protons across the membrane. In Sulfurimonas denitrificans (strain ATCC 33889 / DSM 1251) (Thiomicrospira denitrificans (strain ATCC 33889 / DSM 1251)), this protein is ATP synthase subunit a.